Consider the following 320-residue polypeptide: Cytochrome f (320 aa).

The first 35 residues, 1 to 35 (MQTRKTFSWIKEQITRSISASLMIYIITRTSISSA), serve as a signal peptide directing secretion. Residues tyrosine 36, cysteine 56, cysteine 59, and histidine 60 each coordinate heme. A helical transmembrane segment spans residues 286 to 306 (VQGLLFFLASVILAQIFLVLK).

This sequence belongs to the cytochrome f family. In terms of assembly, the 4 large subunits of the cytochrome b6-f complex are cytochrome b6, subunit IV (17 kDa polypeptide, petD), cytochrome f and the Rieske protein, while the 4 small subunits are PetG, PetL, PetM and PetN. The complex functions as a dimer. Heme serves as cofactor.

It is found in the plastid. Its subcellular location is the chloroplast thylakoid membrane. In terms of biological role, component of the cytochrome b6-f complex, which mediates electron transfer between photosystem II (PSII) and photosystem I (PSI), cyclic electron flow around PSI, and state transitions. In Panax ginseng (Korean ginseng), this protein is Cytochrome f.